The primary structure comprises 248 residues: 5'-nucleotidase SurE (248 aa).

A divalent metal cation is bound by residues D8, D9, S39, and N91.

It belongs to the SurE nucleotidase family. Requires a divalent metal cation as cofactor.

It localises to the cytoplasm. The catalysed reaction is a ribonucleoside 5'-phosphate + H2O = a ribonucleoside + phosphate. Functionally, nucleotidase that shows phosphatase activity on nucleoside 5'-monophosphates. This Neisseria meningitidis serogroup A / serotype 4A (strain DSM 15465 / Z2491) protein is 5'-nucleotidase SurE.